The sequence spans 132 residues: Large ribosomal subunit protein bL17 (132 aa).

The protein belongs to the bacterial ribosomal protein bL17 family. Part of the 50S ribosomal subunit. Contacts protein L32.

This Ralstonia pickettii (strain 12J) protein is Large ribosomal subunit protein bL17.